We begin with the raw amino-acid sequence, 345 residues long: Phosphoribosylformylglycinamidine cyclo-ligase (345 aa).

It belongs to the AIR synthase family.

It is found in the cytoplasm. The catalysed reaction is 2-formamido-N(1)-(5-O-phospho-beta-D-ribosyl)acetamidine + ATP = 5-amino-1-(5-phospho-beta-D-ribosyl)imidazole + ADP + phosphate + H(+). It participates in purine metabolism; IMP biosynthesis via de novo pathway; 5-amino-1-(5-phospho-D-ribosyl)imidazole from N(2)-formyl-N(1)-(5-phospho-D-ribosyl)glycinamide: step 2/2. This chain is Phosphoribosylformylglycinamidine cyclo-ligase, found in Limosilactobacillus reuteri (strain DSM 20016) (Lactobacillus reuteri).